The primary structure comprises 398 residues: Acetate kinase (398 aa).

Asparagine 7 provides a ligand contact to Mg(2+). Lysine 14 is a binding site for ATP. Arginine 91 serves as a coordination point for substrate. The Proton donor/acceptor role is filled by aspartate 148. ATP is bound by residues 208–212 (HLGNG), 283–285 (DFR), and 331–335 (GIGEH). Residue glutamate 386 coordinates Mg(2+).

The protein belongs to the acetokinase family. As to quaternary structure, homodimer. The cofactor is Mg(2+). Mn(2+) is required as a cofactor.

It localises to the cytoplasm. The enzyme catalyses acetate + ATP = acetyl phosphate + ADP. The protein operates within metabolic intermediate biosynthesis; acetyl-CoA biosynthesis; acetyl-CoA from acetate: step 1/2. Catalyzes the formation of acetyl phosphate from acetate and ATP. Can also catalyze the reverse reaction. The protein is Acetate kinase of Clostridium botulinum (strain Alaska E43 / Type E3).